Reading from the N-terminus, the 1414-residue chain is DNA-directed RNA polymerase subunit beta' (1414 aa).

Residues Cys70, Cys72, Cys85, and Cys88 each contribute to the Zn(2+) site. Asp460, Asp462, and Asp464 together coordinate Mg(2+). Zn(2+)-binding residues include Cys814, Cys888, Cys895, and Cys898. A disordered region spans residues 1378-1414 (EREAARQLANPFEDAPVTVGGEPEAPAADTPSDDSAE).

This sequence belongs to the RNA polymerase beta' chain family. As to quaternary structure, the RNAP catalytic core consists of 2 alpha, 1 beta, 1 beta' and 1 omega subunit. When a sigma factor is associated with the core the holoenzyme is formed, which can initiate transcription. Requires Mg(2+) as cofactor. Zn(2+) is required as a cofactor.

The enzyme catalyses RNA(n) + a ribonucleoside 5'-triphosphate = RNA(n+1) + diphosphate. DNA-dependent RNA polymerase catalyzes the transcription of DNA into RNA using the four ribonucleoside triphosphates as substrates. The polypeptide is DNA-directed RNA polymerase subunit beta' (Bordetella bronchiseptica (strain ATCC BAA-588 / NCTC 13252 / RB50) (Alcaligenes bronchisepticus)).